We begin with the raw amino-acid sequence, 74 residues long: Ubiquitin-like protein FUBI (74 aa).

Belongs to the ubiquitin family.

The protein is Ubiquitin-like protein FUBI (Fau) of Mus spicilegus (Steppe mouse).